The sequence spans 340 residues: Spike protein P5 (340 aa).

Residues alanine 2–proline 122 form a domain-1 region. The 19-residue stretch at serine 123 to threonine 141 folds into the Collagen-like domain. Positions valine 142–asparagine 340 are domain-2.

Homotrimer.

It localises to the virion. Its function is as follows. In association with P31 and P2, forms the spike complexes located at the 5-fold vertices of the capsid. Essential for viral infectivity. This chain is Spike protein P5 (V), found in Enterobacteria phage PRD1 (Bacteriophage PRD1).